The following is a 550-amino-acid chain: Dipeptide-binding protein (550 aa).

An N-terminal signal peptide occupies residues 1–22; the sequence is MKQAKIIGLSTVIALSGIILVA. The N-palmitoyl cysteine moiety is linked to residue cysteine 23. Residue cysteine 23 is the site of S-diacylglycerol cysteine attachment.

The protein belongs to the bacterial solute-binding protein 5 family. In terms of assembly, the complex is composed of two ATP-binding proteins (DppD and DppF), two transmembrane proteins (DppB and DppC) and a solute-binding protein (DppA).

It is found in the cell membrane. Part of the ABC transporter DppABCDF involved in dipeptide transport. Binds di- and tripeptides with high affinity. Requires a free N-terminal alpha-amino group and an alpha-peptide bound contiguous with the N-terminal amino group, has a strong selectivity for L-residues, and shows preference for dipeptides containing methionine or arginine, followed by hydrophobic tripeptides consisting of leucine or valine residues. This is Dipeptide-binding protein from Lactococcus lactis subsp. cremoris (strain MG1363).